Here is a 577-residue protein sequence, read N- to C-terminus: Aspartate--tRNA(Asp/Asn) ligase (577 aa).

Residue Glu-171 participates in L-aspartate binding. The tract at residues 195–198 is aspartate; it reads QLFK. Arg-217 serves as a coordination point for L-aspartate. ATP contacts are provided by residues 217 to 219 and Gln-226; that span reads RDE. His-444 contributes to the L-aspartate binding site. Glu-474 is a binding site for ATP. Arg-481 serves as a coordination point for L-aspartate. ATP is bound at residue 526–529; sequence GFDR.

The protein belongs to the class-II aminoacyl-tRNA synthetase family. Type 1 subfamily. In terms of assembly, homodimer.

It localises to the cytoplasm. The catalysed reaction is tRNA(Asx) + L-aspartate + ATP = L-aspartyl-tRNA(Asx) + AMP + diphosphate. Its function is as follows. Aspartyl-tRNA synthetase with relaxed tRNA specificity since it is able to aspartylate not only its cognate tRNA(Asp) but also tRNA(Asn). Reaction proceeds in two steps: L-aspartate is first activated by ATP to form Asp-AMP and then transferred to the acceptor end of tRNA(Asp/Asn). The sequence is that of Aspartate--tRNA(Asp/Asn) ligase from Helicobacter pylori (strain HPAG1).